The chain runs to 182 residues: Ribosome maturation factor RimM (182 aa).

A PRC barrel domain is found at 103-182 (EDEFYWRELF…RIEVDWDPGF (80 aa)).

It belongs to the RimM family. As to quaternary structure, binds ribosomal protein uS19.

It is found in the cytoplasm. In terms of biological role, an accessory protein needed during the final step in the assembly of 30S ribosomal subunit, possibly for assembly of the head region. Essential for efficient processing of 16S rRNA. May be needed both before and after RbfA during the maturation of 16S rRNA. It has affinity for free ribosomal 30S subunits but not for 70S ribosomes. This is Ribosome maturation factor RimM from Vibrio parahaemolyticus serotype O3:K6 (strain RIMD 2210633).